Here is a 328-residue protein sequence, read N- to C-terminus: 17-beta-hydroxysteroid dehydrogenase type 1 (328 aa).

Residues 10–38 (GCSSGIGLHLAVRLASDPSQSFKVYATLR) and Asp66 each bind NADP(+). Ser135 is subject to Phosphoserine; by PKA. Ser143 contacts substrate. Tyr156 serves as the catalytic Proton acceptor. Lys160 contributes to the NADP(+) binding site. Positions 291 to 328 (KAEAGAEAGGGAGPGAEDEAGRGAVGDPELGDPPAAPQ) are disordered.

It belongs to the short-chain dehydrogenases/reductases (SDR) family. As to quaternary structure, homodimer. Exists predominantly as a homodimer but also exits as monomer.

It is found in the cytoplasm. It catalyses the reaction 17beta-estradiol + NAD(+) = estrone + NADH + H(+). The catalysed reaction is 17beta-estradiol + NADP(+) = estrone + NADPH + H(+). The enzyme catalyses testosterone + NADP(+) = androst-4-ene-3,17-dione + NADPH + H(+). It functions in the pathway steroid biosynthesis; estrogen biosynthesis. Functionally, favors the reduction of estrogens and androgens. Converts estrone (E1) to a more potent estrogen, 17beta-estradiol (E2). Also has 20-alpha-HSD activity. Uses preferentially NADH. This is 17-beta-hydroxysteroid dehydrogenase type 1 from Homo sapiens (Human).